We begin with the raw amino-acid sequence, 266 residues long: Lectin 7 (266 aa).

Positions Met-1–Ser-27 are cleaved as a signal peptide. Asn-121, Asn-205, and Asn-219 each carry an N-linked (GlcNAc...) asparagine glycan.

This sequence belongs to the leguminous lectin family.

Functionally, may be involved in arbuscular mycorrhizal (AM) symbiosis with AM fungi. The protein is Lectin 7 of Medicago truncatula (Barrel medic).